The chain runs to 231 residues: S-norcoclaurine synthase 1 (231 aa).

107-109 (YKE) contributes to the dopamine binding site. Residue Lys-121 is the Proton donor of the active site. Asp-140 provides a ligand contact to (4-hydroxyphenyl)acetaldehyde. Residues 210–230 (LLLCLIICLVIAGGMFVAGVP) form a helical membrane-spanning segment.

Belongs to the BetVI family. Detected in roots, stems, leaves, flower buds and germinating seeds.

It localises to the membrane. It carries out the reaction (4-hydroxyphenyl)acetaldehyde + dopamine = (S)-norcoclaurine + H2O. Its pathway is alkaloid biosynthesis; (S)-reticuline biosynthesis. With respect to regulation, activity doubles within 5 hours of elicitor treatment and continues to increase for at least 80 hours. Functionally, involved in the biosynthesis of (S)-coclaurine, the common precursor of all benzylisoquinoline alkaloids such as morphine, sanguinarine, codeine or papaverine. Condenses dopamine and 4-hydroxyphenylacetaldehyde. This chain is S-norcoclaurine synthase 1, found in Papaver somniferum (Opium poppy).